Reading from the N-terminus, the 409-residue chain is Mitochondrial import inner membrane translocase subunit TIM50-B (409 aa).

A mitochondrion-targeting transit peptide spans methionine 1–glycine 42. Residues glycine 43–lysine 127 lie on the Mitochondrial matrix side of the membrane. Residues proline 93–glutamate 114 form a disordered region. Residues glutamate 102–glutamate 111 show a composition bias toward basic and acidic residues. The helical transmembrane segment at leucine 128 to tyrosine 148 threads the bilayer. Residues glycine 149–histidine 409 are Mitochondrial intermembrane-facing. The FCP1 homology domain maps to tyrosine 205 to leucine 348.

The protein belongs to the TIM50 family. Component of the TIM23 complex at least composed of Tim23, Tim17 (Tim17a1, Tim17a2 or Tim17b1) and a Tim50. In terms of tissue distribution, exclusively expressed in the testis.

Its subcellular location is the mitochondrion inner membrane. Its function is as follows. Essential component of the TIM23 complex, a complex that mediates the translocation of transit peptide-containing proteins across the mitochondrial inner membrane. This Drosophila melanogaster (Fruit fly) protein is Mitochondrial import inner membrane translocase subunit TIM50-B (ttm2).